The primary structure comprises 167 residues: SLRECELYVQKTDSREDEISPPPPNPVVKRGAISAEVYTEEDAASYVRNVLFSHLDDNERILMGSTLRMYEEFLSKVSILESLDKLTVADALEPVQFEDGQKIVVQGEPGDEFFIILEGTAAVLQRRSENEEFVEVGRLGPSDYFGEIALLMNRPRVLGPCSDILKR.

Residue Thr12 is modified to Phosphothreonine. 2 positions are modified to phosphoserine: Ser14 and Ser20. The Pseudophosphorylation motif signature appears at 30–33 (RGAI). Position 34 is a phosphoserine (Ser34). 3',5'-cyclic AMP-binding positions include 51 to 78 (LFSH…SKVS), 79 to 167 (ILES…ILKR), Glu147, and Arg156. Residue Ser82 is modified to Phosphoserine.

It belongs to the cAMP-dependent kinase regulatory chain family. As to quaternary structure, the inactive holoenzyme is composed of two regulatory chains and two catalytic chains. Activation by cAMP releases the two active catalytic monomers and the regulatory dimer. Interacts with PRKACA and PRKACB. PRKAR1A also interacts with RFC2; the complex may be involved in cell survival. Interacts with AKAP4. Interacts with RARA; the interaction occurs in the presence of cAMP or FSH and regulates RARA transcriptional activity. Interacts with the phosphorylated form of PJA2. Interacts with CBFA2T3. Interacts with PRKX; regulates this cAMP-dependent protein kinase. Interacts with smAKAP; this interaction may target PRKAR1A to the plasma membrane. Interacts with AICDA. In terms of processing, the pseudophosphorylation site binds to the substrate-binding region of the catalytic chain, resulting in the inhibition of its activity.

It is found in the cell membrane. Its function is as follows. Regulatory subunit of the cAMP-dependent protein kinases involved in cAMP signaling in cells. The chain is cAMP-dependent protein kinase type I-alpha regulatory subunit from Mesocricetus auratus (Golden hamster).